A 185-amino-acid polypeptide reads, in one-letter code: GTP cyclohydrolase 1 (185 aa).

The Zn(2+) site is built by Cys-75, His-78, and Cys-146.

Belongs to the GTP cyclohydrolase I family. In terms of assembly, toroid-shaped homodecamer, composed of two pentamers of five dimers.

It catalyses the reaction GTP + H2O = 7,8-dihydroneopterin 3'-triphosphate + formate + H(+). The protein operates within cofactor biosynthesis; 7,8-dihydroneopterin triphosphate biosynthesis; 7,8-dihydroneopterin triphosphate from GTP: step 1/1. The sequence is that of GTP cyclohydrolase 1 from Alkalilimnicola ehrlichii (strain ATCC BAA-1101 / DSM 17681 / MLHE-1).